The sequence spans 337 residues: Anthranilate phosphoribosyltransferase (337 aa).

Residues G81, 84–85 (GD), S89, 91–94 (NVST), 109–117 (KHGNRAATS), and A121 contribute to the 5-phospho-alpha-D-ribose 1-diphosphate site. G81 is a binding site for anthranilate. Residue S93 participates in Mg(2+) binding. Residue N112 participates in anthranilate binding. R167 lines the anthranilate pocket. 2 residues coordinate Mg(2+): D226 and E227.

This sequence belongs to the anthranilate phosphoribosyltransferase family. As to quaternary structure, homodimer. Requires Mg(2+) as cofactor.

It carries out the reaction N-(5-phospho-beta-D-ribosyl)anthranilate + diphosphate = 5-phospho-alpha-D-ribose 1-diphosphate + anthranilate. It participates in amino-acid biosynthesis; L-tryptophan biosynthesis; L-tryptophan from chorismate: step 2/5. Functionally, catalyzes the transfer of the phosphoribosyl group of 5-phosphorylribose-1-pyrophosphate (PRPP) to anthranilate to yield N-(5'-phosphoribosyl)-anthranilate (PRA). This chain is Anthranilate phosphoribosyltransferase, found in Methylorubrum extorquens (strain CM4 / NCIMB 13688) (Methylobacterium extorquens).